A 457-amino-acid chain; its full sequence is Adenylosuccinate synthetase isozyme 1 (457 aa).

Positions 1–24 (MSGTRASNDRPPGTGGVKRGRLQQ) are disordered. GTP is bound by residues 42-48 (GDEGKGK) and 70-72 (GHT). The active-site Proton acceptor is aspartate 43. The Mg(2+) site is built by aspartate 43 and glycine 70. Residue aspartate 43 participates in substrate binding. Residues 43 to 46 (DEGK), 68 to 71 (NAGH), threonine 163, arginine 177, asparagine 256, threonine 271, and arginine 335 each bind IMP. The active-site Proton donor is histidine 71. 331–337 (VTTGRKR) contacts substrate. Residues arginine 337, 363 to 365 (KLD), and 445 to 448 (GVGK) each bind GTP.

Belongs to the adenylosuccinate synthetase family. In terms of assembly, homodimer. Mg(2+) serves as cofactor. As to expression, high levels in muscle.

Its subcellular location is the cytoplasm. It is found in the membrane. The catalysed reaction is IMP + L-aspartate + GTP = N(6)-(1,2-dicarboxyethyl)-AMP + GDP + phosphate + 2 H(+). It participates in purine metabolism; AMP biosynthesis via de novo pathway; AMP from IMP: step 1/2. Its activity is regulated as follows. Weakly inhibited by AMP non-competitively to all substrates. Inhibited by IMP non-competitively with respect to GTP. Inhibited by fructose 1,6-bisphosphate competitively with respect to IMP. In terms of biological role, component of the purine nucleotide cycle (PNC), which interconverts IMP and AMP to regulate the nucleotide levels in various tissues, and which contributes to glycolysis and ammoniagenesis. Catalyzes the first committed step in the biosynthesis of AMP from IMP. The chain is Adenylosuccinate synthetase isozyme 1 (Adss1) from Mus musculus (Mouse).